The following is a 139-amino-acid chain: Transcription antitermination protein NusB (139 aa).

It belongs to the NusB family.

Functionally, involved in transcription antitermination. Required for transcription of ribosomal RNA (rRNA) genes. Binds specifically to the boxA antiterminator sequence of the ribosomal RNA (rrn) operons. The protein is Transcription antitermination protein NusB of Pectobacterium carotovorum subsp. carotovorum (strain PC1).